Here is an 882-residue protein sequence, read N- to C-terminus: Exo-beta-D-glucosaminidase ARB_07888 (882 aa).

The signal sequence occupies residues 1 to 21; sequence MWFVFRPAAIPALLLTLGVSA. The propeptide occupies 22–31; the sequence is LSPLRPLVST. N-linked (GlcNAc...) asparagine glycans are attached at residues N86, N200, N234, N237, N287, and N442. D466 acts as the Proton donor in catalysis. E538 acts as the Nucleophile in catalysis. 3 N-linked (GlcNAc...) asparagine glycosylation sites follow: N688, N773, and N816.

It belongs to the glycosyl hydrolase 2 family. In terms of assembly, monomer.

It is found in the secreted. It catalyses the reaction Hydrolysis of chitosan or chitosan oligosaccharides to remove successive D-glucosamine residues from the non-reducing termini.. In terms of biological role, hydrolyzes chitosan and chitooligosaccharides with retention of anomeric configuration. In Arthroderma benhamiae (strain ATCC MYA-4681 / CBS 112371) (Trichophyton mentagrophytes), this protein is Exo-beta-D-glucosaminidase ARB_07888.